The primary structure comprises 132 residues: L-ectoine synthase (132 aa).

This sequence belongs to the ectoine synthase family.

The catalysed reaction is (2S)-4-acetamido-2-aminobutanoate = L-ectoine + H2O. The protein operates within amine and polyamine biosynthesis; ectoine biosynthesis; L-ectoine from L-aspartate 4-semialdehyde: step 3/3. Functionally, catalyzes the circularization of gamma-N-acetyl-alpha,gamma-diaminobutyric acid (ADABA) to ectoine (1,4,5,6-tetrahydro-2-methyl-4-pyrimidine carboxylic acid), which is an excellent osmoprotectant. In Saccharophagus degradans (strain 2-40 / ATCC 43961 / DSM 17024), this protein is L-ectoine synthase.